The primary structure comprises 462 residues: Cytochrome P450 20A1 (462 aa).

A helical transmembrane segment spans residues 4–24 (FAIFAVTFLLALVGAVLYLYP). Cysteine 409 contributes to the heme binding site.

Belongs to the cytochrome P450 family. The cofactor is heme.

The protein localises to the membrane. The sequence is that of Cytochrome P450 20A1 (Cyp20a1) from Mus musculus (Mouse).